We begin with the raw amino-acid sequence, 370 residues long: Probable butyrate kinase (370 aa).

The protein belongs to the acetokinase family.

Its subcellular location is the cytoplasm. It carries out the reaction butanoate + ATP = butanoyl phosphate + ADP. This Elusimicrobium minutum (strain Pei191) protein is Probable butyrate kinase.